The chain runs to 102 residues: Small ribosomal subunit protein uS10 (102 aa).

This sequence belongs to the universal ribosomal protein uS10 family. As to quaternary structure, part of the 30S ribosomal subunit.

Its function is as follows. Involved in the binding of tRNA to the ribosomes. The polypeptide is Small ribosomal subunit protein uS10 (Heliobacterium modesticaldum (strain ATCC 51547 / Ice1)).